A 127-amino-acid chain; its full sequence is Glycine cleavage system H protein (127 aa).

The 83-residue stretch at 22 to 104 (EVVIGITHFA…YEGAWMVKVE (83 aa)) folds into the Lipoyl-binding domain. Lysine 63 is modified (N6-lipoyllysine).

It belongs to the GcvH family. The glycine cleavage system is composed of four proteins: P, T, L and H. The cofactor is (R)-lipoate.

In terms of biological role, the glycine cleavage system catalyzes the degradation of glycine. The H protein shuttles the methylamine group of glycine from the P protein to the T protein. Functionally, is also involved in protein lipoylation via its role as an octanoyl/lipoyl carrier protein intermediate. The polypeptide is Glycine cleavage system H protein (Bacillus cereus (strain G9842)).